The sequence spans 772 residues: Putative ribosomal protein S6 kinase alpha-2 (772 aa).

In terms of domain architecture, Protein kinase 1 spans Phe-17–Met-284. ATP-binding positions include Leu-23–Val-31 and Lys-49. The active-site Proton acceptor is the Asp-145. Ser-180, Ser-342, and Ser-347 each carry phosphoserine; by autocatalysis. Residues Ser-285–Asp-353 enclose the AGC-kinase C-terminal domain. The region spanning Lys-382 to Leu-653 is the Protein kinase 2 domain. ATP contacts are provided by residues Leu-388–Val-396 and Lys-411. Asp-500 serves as the catalytic Proton acceptor. Residues Arg-706–Ser-772 are disordered. Ser-712 is modified (phosphoserine; by autocatalysis). 2 stretches are compositionally biased toward polar residues: residues Ser-718 to Thr-727 and Glu-739 to Ser-748.

This sequence belongs to the protein kinase superfamily. AGC Ser/Thr protein kinase family. S6 kinase subfamily. It depends on Mg(2+) as a cofactor.

The catalysed reaction is L-seryl-[protein] + ATP = O-phospho-L-seryl-[protein] + ADP + H(+). The enzyme catalyses L-threonyl-[protein] + ATP = O-phospho-L-threonyl-[protein] + ADP + H(+). Its activity is regulated as follows. Activated by multiple phosphorylations on threonine and serine residues. In terms of biological role, serine/threonine kinase that may play a role in mediating the mitogen- and stress-induced effects on transcription. May repress transcription via phosphorylation of 'Ser-1' of histone H2A. May phosphorylate histone H3. The chain is Putative ribosomal protein S6 kinase alpha-2 (rskn-2) from Caenorhabditis elegans.